A 329-amino-acid chain; its full sequence is uncharacterized protein (329 aa).

10 consecutive transmembrane segments (helical) span residues Leu-9–Val-29, Ser-53–Ile-73, Phe-105–Ile-125, Ala-126–Asn-146, Trp-154–Gly-174, Leu-179–Phe-199, Val-210–Ile-230, Trp-240–Leu-260, Ala-273–Gln-293, and Leu-296–Tyr-316. EamA domains lie at Cys-103–Pro-169 and Ile-191–Tyr-316.

Belongs to the EamA transporter family.

The protein resides in the cell membrane. This is an uncharacterized protein from Synechocystis sp. (strain ATCC 27184 / PCC 6803 / Kazusa).